Here is a 142-residue protein sequence, read N- to C-terminus: Large-conductance mechanosensitive channel (142 aa).

A run of 3 helical transmembrane segments spans residues 14 to 34, 38 to 58, and 82 to 102; these read VMDL…VTSV, LVMP…NYFL, and GSFI…FLLV.

The protein belongs to the MscL family. In terms of assembly, homopentamer.

It localises to the cell inner membrane. In terms of biological role, channel that opens in response to stretch forces in the membrane lipid bilayer. May participate in the regulation of osmotic pressure changes within the cell. In Sinorhizobium fredii (strain NBRC 101917 / NGR234), this protein is Large-conductance mechanosensitive channel.